A 268-amino-acid chain; its full sequence is Hemin import ATP-binding protein HmuV (268 aa).

The region spanning 5–242 (IEARHLSKRA…ETIRDIFEID (238 aa)) is the ABC transporter domain. 37-44 (GPNGAGKS) lines the ATP pocket.

It belongs to the ABC transporter superfamily. Heme (hemin) importer (TC 3.A.1.14.5) family. The complex is composed of two ATP-binding proteins (HmuV), two transmembrane proteins (HmuU) and a solute-binding protein (HmuT).

It localises to the cell inner membrane. Functionally, part of the ABC transporter complex HmuTUV involved in hemin import. Responsible for energy coupling to the transport system. This is Hemin import ATP-binding protein HmuV from Bradyrhizobium diazoefficiens (strain JCM 10833 / BCRC 13528 / IAM 13628 / NBRC 14792 / USDA 110).